The sequence spans 334 residues: Phosphate acyltransferase (334 aa).

The protein belongs to the PlsX family. As to quaternary structure, homodimer. Probably interacts with PlsY.

The protein localises to the cytoplasm. It catalyses the reaction a fatty acyl-[ACP] + phosphate = an acyl phosphate + holo-[ACP]. The protein operates within lipid metabolism; phospholipid metabolism. In terms of biological role, catalyzes the reversible formation of acyl-phosphate (acyl-PO(4)) from acyl-[acyl-carrier-protein] (acyl-ACP). This enzyme utilizes acyl-ACP as fatty acyl donor, but not acyl-CoA. The polypeptide is Phosphate acyltransferase (Thermotoga petrophila (strain ATCC BAA-488 / DSM 13995 / JCM 10881 / RKU-1)).